The primary structure comprises 624 residues: Chaperone protein HtpG (624 aa).

The segment at 1-336 is a; substrate-binding; that stretch reads MKTQKKEVYN…SSDLPLNISR (336 aa). The tract at residues 337 to 552 is b; the sequence is EILQDNSITE…STEMTTQMAK (216 aa). The interval 553–624 is c; it reads LFSAAGQSVP…ISRMNKLLIK (72 aa).

Belongs to the heat shock protein 90 family. In terms of assembly, homodimer.

It is found in the cytoplasm. Molecular chaperone. Has ATPase activity. This Buchnera aphidicola subsp. Acyrthosiphon pisum (strain APS) (Acyrthosiphon pisum symbiotic bacterium) protein is Chaperone protein HtpG.